Consider the following 572-residue polypeptide: Potassium-transporting ATPase potassium-binding subunit (572 aa).

Helical transmembrane passes span 5–25 (LAAG…YVPL), 71–91 (VGYT…LYVL), 97–117 (VLPL…NTAV), 142–162 (GLAV…VALI), 188–208 (ILLP…TIQS), 258–278 (PTPL…VCLT), 292–312 (LTVL…VTWA), 387–407 (GLYG…LLVG), 422–442 (ITMA…GTGI), 500–520 (LGMA…ALAG), and 548–568 (GTVL…GPIA).

It belongs to the KdpA family. In terms of assembly, the system is composed of three essential subunits: KdpA, KdpB and KdpC.

The protein localises to the cell membrane. In terms of biological role, part of the high-affinity ATP-driven potassium transport (or Kdp) system, which catalyzes the hydrolysis of ATP coupled with the electrogenic transport of potassium into the cytoplasm. This subunit binds the extracellular potassium ions and delivers the ions to the membrane domain of KdpB through an intramembrane tunnel. The protein is Potassium-transporting ATPase potassium-binding subunit of Mycobacteroides abscessus (strain ATCC 19977 / DSM 44196 / CCUG 20993 / CIP 104536 / JCM 13569 / NCTC 13031 / TMC 1543 / L948) (Mycobacterium abscessus).